The chain runs to 702 residues: Putative endo-beta-N-acetylglucosaminidase (702 aa).

An N-terminal signal peptide occupies residues 1–23; that stretch reads MKKVRFIFLALLFFLASPEGAMA. 15 Cell wall-binding repeats span residues 42-63, 65-84, 86-105, 124-145, 147-166, 185-206, 208-227, 229-248, 250-271, 273-292, 294-315, 317-336, 338-359, 361-380, and 382-403; these read ANEWVFDTHYQSWFYIKADANY, ENEWLKQGDDYFYLKSGGYM, KSEWVEDKGAFYYLDQDGKM, IEDWVYDSQYDAWFYIKADGQH, EKEWLQIKGKDYYFKSGGYL, QQGWLFDKQYQSWFYIKENGNY, DKEWIFENGHYYYLKSGGYM, ANEWIWDKESWFYLKFDGKI, EKEWVYDSHSQAWYYFKSGGYM, ANEWIWDKESWFYLKFDGKM, ANEWIWDKESWFYLKSDGKI, and ANEWIWDKESWFYLKSDGKM.

It belongs to the glycosyl hydrolase 73 family.

Its subcellular location is the secreted. It carries out the reaction an N(4)-(oligosaccharide-(1-&gt;3)-[oligosaccharide-(1-&gt;6)]-beta-D-Man-(1-&gt;4)-beta-D-GlcNAc-(1-&gt;4)-alpha-D-GlcNAc)-L-asparaginyl-[protein] + H2O = an oligosaccharide-(1-&gt;3)-[oligosaccharide-(1-&gt;6)]-beta-D-Man-(1-&gt;4)-D-GlcNAc + N(4)-(N-acetyl-beta-D-glucosaminyl)-L-asparaginyl-[protein]. Its function is as follows. Plays an important role in cell wall degradation and cell separation. The sequence is that of Putative endo-beta-N-acetylglucosaminidase (lytB) from Streptococcus pneumoniae (strain ATCC BAA-255 / R6).